The sequence spans 378 residues: MTENKSFKESHPLDDFISDKELSNTTIQKEKLTIEQQKQVDTISKQINPLDNEGLLAFGSDLQKQMSQFSHQMLDEVQSKDVGPIGDTLSDLISKLKSVNPNELNTDKPSMLKRIFSRAKSSINEIFSRMQSVSAQVDRITIQLQKHQTHLTRDIELLDTLYDKNKQYFDDLSLHIIAAQQKKLQLENEKLPQLQQQAQQSTNQMDIQHVADMQQFIDRLDKRIYDLQLSRQIALQTAPQIRMIQNVNQALAEKIQSSILTSIPLWKNQMAIALTLMRQRNAVAAQRAVTDTTNDLLTANAEMLKQNAIETATENERGIVDLDTLKRTQRNIIETIEETLIIQQHGREERQLAEKELQQLEQDLKSHLVNIKGTNKQS.

Belongs to the TelA family.

This chain is TelA-like protein SAS1347, found in Staphylococcus aureus (strain MSSA476).